The sequence spans 372 residues: Alanine racemase (372 aa).

Lys33 functions as the Proton acceptor; specific for D-alanine in the catalytic mechanism. An N6-(pyridoxal phosphate)lysine modification is found at Lys33. A substrate-binding site is contributed by Arg131. Tyr261 functions as the Proton acceptor; specific for L-alanine in the catalytic mechanism. Met309 is a binding site for substrate.

It belongs to the alanine racemase family. The cofactor is pyridoxal 5'-phosphate.

The catalysed reaction is L-alanine = D-alanine. The protein operates within amino-acid biosynthesis; D-alanine biosynthesis; D-alanine from L-alanine: step 1/1. Its function is as follows. Catalyzes the interconversion of L-alanine and D-alanine. May also act on other amino acids. In Salinispora arenicola (strain CNS-205), this protein is Alanine racemase (alr).